A 143-amino-acid chain; its full sequence is Large ribosomal subunit protein uL13 (143 aa).

Belongs to the universal ribosomal protein uL13 family. Part of the 50S ribosomal subunit.

In terms of biological role, this protein is one of the early assembly proteins of the 50S ribosomal subunit, although it is not seen to bind rRNA by itself. It is important during the early stages of 50S assembly. The polypeptide is Large ribosomal subunit protein uL13 (Natranaerobius thermophilus (strain ATCC BAA-1301 / DSM 18059 / JW/NM-WN-LF)).